Consider the following 136-residue polypeptide: Protein NrdI (136 aa).

The protein belongs to the NrdI family.

Its function is as follows. Probably involved in ribonucleotide reductase function. The protein is Protein NrdI of Erwinia tasmaniensis (strain DSM 17950 / CFBP 7177 / CIP 109463 / NCPPB 4357 / Et1/99).